The primary structure comprises 286 residues: Ribosomal RNA small subunit methyltransferase A (286 aa).

S-adenosyl-L-methionine-binding residues include asparagine 31, isoleucine 33, glycine 58, glutamate 80, aspartate 106, and asparagine 125.

This sequence belongs to the class I-like SAM-binding methyltransferase superfamily. rRNA adenine N(6)-methyltransferase family. RsmA subfamily.

It is found in the cytoplasm. It carries out the reaction adenosine(1518)/adenosine(1519) in 16S rRNA + 4 S-adenosyl-L-methionine = N(6)-dimethyladenosine(1518)/N(6)-dimethyladenosine(1519) in 16S rRNA + 4 S-adenosyl-L-homocysteine + 4 H(+). In terms of biological role, specifically dimethylates two adjacent adenosines (A1518 and A1519) in the loop of a conserved hairpin near the 3'-end of 16S rRNA in the 30S particle. May play a critical role in biogenesis of 30S subunits. The chain is Ribosomal RNA small subunit methyltransferase A from Wolbachia pipientis wMel.